Consider the following 522-residue polypeptide: uncharacterized protein (522 aa).

The span at 1 to 11 (MSSITSRVSSR) shows a compositional bias: low complexity. A disordered region spans residues 1-20 (MSSITSRVSSRSSHELTEKK). A run of 12 helical transmembrane segments spans residues 69–89 (VLWK…MIQY), 116–136 (SMTT…AILM), 141–161 (LSYF…LMAA), 173–193 (FLAG…TAMW), 204–224 (LCWY…SYGL), 236–256 (YVFI…VFIP), 303–323 (VIMI…GVFS), 338–358 (AVLN…SGVL), 367–387 (LLIG…IWKI), 396–416 (LVGV…LSLI), 428–448 (VTSA…PQLF), and 462–482 (AMIV…GYYI).

Belongs to the major facilitator superfamily. Allantoate permease family.

The protein resides in the endoplasmic reticulum. It localises to the membrane. This is an uncharacterized protein from Schizosaccharomyces pombe (strain 972 / ATCC 24843) (Fission yeast).